The chain runs to 50 residues: U3-ctenitoxin-Asp1a (50 aa).

Expressed by the venom gland.

The protein localises to the secreted. Possible neurotoxin. This chain is U3-ctenitoxin-Asp1a, found in Ancylometes sp. (South American fishing spider).